The following is a 303-amino-acid chain: Hemolysin E, chromosomal (303 aa).

The cysteines at positions 87 and 285 are disulfide-linked. Residues 183–203 (AGVVAGPFGLIISYSIAAGVV) form a helical membrane-spanning segment.

As to quaternary structure, monomer and oligomer. In periplasm, it is present as a monomer, while in outer membrane vesicles, it oligomerizes to form a pore structure that is active. The pore is formed by a dodecamer. In periplasm, it forms a disulfide bond between Cys-87 and Cys-285, which prevents the oligomerization. In outer membrane vesicles, the redox status prevents formation of the disulfide bond, leading to oligomerization and pore formation.

The protein resides in the secreted. It localises to the periplasm. Its subcellular location is the host cell membrane. In terms of biological role, toxin, which has some hemolytic activity towards mammalian cells. Acts by forming a pore-like structure upon contact with mammalian cells. The protein is Hemolysin E, chromosomal (hlyE) of Escherichia coli (strain K12).